Reading from the N-terminus, the 227-residue chain is Ribonuclease 3 (227 aa).

The RNase III domain occupies 5 to 127 (LNALQLRLQH…LIGAVYLDAG (123 aa)). Position 40 (Glu40) interacts with Mg(2+). Residue Asp44 is part of the active site. Mg(2+) is bound by residues Asp113 and Glu116. Glu116 is an active-site residue. The DRBM domain occupies 154-224 (DAKTALQEWL…ATAMLELLKA (71 aa)).

The protein belongs to the ribonuclease III family. As to quaternary structure, homodimer. Requires Mg(2+) as cofactor.

It localises to the cytoplasm. It catalyses the reaction Endonucleolytic cleavage to 5'-phosphomonoester.. Functionally, digests double-stranded RNA. Involved in the processing of primary rRNA transcript to yield the immediate precursors to the large and small rRNAs (23S and 16S). Processes some mRNAs, and tRNAs when they are encoded in the rRNA operon. Processes pre-crRNA and tracrRNA of type II CRISPR loci if present in the organism. This Delftia acidovorans (strain DSM 14801 / SPH-1) protein is Ribonuclease 3.